Here is a 270-residue protein sequence, read N- to C-terminus: Elongation factor Ts (270 aa).

The tract at residues 81-84 (TDFV) is involved in Mg(2+) ion dislocation from EF-Tu.

The protein belongs to the EF-Ts family.

It is found in the cytoplasm. Its function is as follows. Associates with the EF-Tu.GDP complex and induces the exchange of GDP to GTP. It remains bound to the aminoacyl-tRNA.EF-Tu.GTP complex up to the GTP hydrolysis stage on the ribosome. This chain is Elongation factor Ts, found in Wigglesworthia glossinidia brevipalpis.